A 307-amino-acid polypeptide reads, in one-letter code: Ribosomal RNA small subunit methyltransferase H (307 aa).

S-adenosyl-L-methionine is bound by residues 32–34 (GGH), D52, F78, D99, and Q106.

It belongs to the methyltransferase superfamily. RsmH family.

The protein resides in the cytoplasm. The catalysed reaction is cytidine(1402) in 16S rRNA + S-adenosyl-L-methionine = N(4)-methylcytidine(1402) in 16S rRNA + S-adenosyl-L-homocysteine + H(+). Its function is as follows. Specifically methylates the N4 position of cytidine in position 1402 (C1402) of 16S rRNA. The sequence is that of Ribosomal RNA small subunit methyltransferase H from Caldicellulosiruptor saccharolyticus (strain ATCC 43494 / DSM 8903 / Tp8T 6331).